A 614-amino-acid polypeptide reads, in one-letter code: MDRKVTVHEDGCPVVSWVPEEGEMMDQKDKDQVKDRGQWTNKMEFVLSVAGEIIGLGNVWRFPYLCYKNGGGAFFIPYFIFFFSCGIPVFFLEVALGQYSSQGSVTAWRKICPLLQGIGMASVVIESYLNIYYIIILAWALFYLFSSFTWELPWTTCTNSWNTEHCVDFLNYSSTRAASYSENFTSPVMEFWERRVLGITSGIHDLGSLRWELALCLLLAWIICYFCIWKGVKSTGKVVYFTATFPYLMLIILLIRGVTLPGAYQGIVFYLKPDLLRLKDPQVWMDAGTQIFFSFAICQGCLTALGSYNKYHNNCYRDSIALCFLNSATSFVAGFVVFSILGFMAQEQGVPISEVAESGPGLAFIAFPKAVTMMPLSQLWSCLFFLMLLFLGLDSQFVCMECLVTASMDMFPQQLRKRGRRELLILAVAIVCYLMGLLLVTEGGMYIFQLFDYYASSGICLLFLSLFEVICIGWVYGADRFYDNVEDMIGYRPWPLVKISWLFLTPGLCLATFFFSLSKYTPLKYNNVYIYPSWGYSIGWLLAFSSMACVPLFIIITLLKTQGSFKKRLQRLITPDPSLPQPGRRSPQDGSSAQNCSTSPVKQELIAWEKETHL.

Over 1–44 the chain is Cytoplasmic; it reads MDRKVTVHEDGCPVVSWVPEEGEMMDQKDKDQVKDRGQWTNKME. The next 3 membrane-spanning stretches (helical) occupy residues 45-65, 73-92, and 117-137; these read FVLSVAGEIIGLGNVWRFPYL, AFFIPYFIFFFSCGIPVFFL, and GIGMASVVIESYLNIYYIIIL. The Extracellular segment spans residues 138-210; sequence AWALFYLFSS…SGIHDLGSLR (73 aa). 2 N-linked (GlcNAc...) asparagine glycosylation sites follow: Asn171 and Asn183. The next 9 helical transmembrane spans lie at 211–229, 238–255, 291–308, 320–341, 374–393, 423–441, 458–478, 499–518, and 538–556; these read WELALCLLLAWIICYFCIW, VVYFTATFPYLMLIILLI, IFFSFAICQGCLTALGSY, IALCFLNSATSFVAGFVVFSIL, MPLSQLWSCLFFLMLLFLGL, LLILAVAIVCYLMGLLLVT, GICLLFLSLFEVICIGWVYGA, ISWLFLTPGLCLATFFFSLS, and IGWLLAFSSMACVPLFIII. At 557 to 614 the chain is on the cytoplasmic side; the sequence is TLLKTQGSFKKRLQRLITPDPSLPQPGRRSPQDGSSAQNCSTSPVKQELIAWEKETHL. Residues 574–600 are disordered; the sequence is TPDPSLPQPGRRSPQDGSSAQNCSTSP. At Ser586 the chain carries Phosphoserine. A compositionally biased stretch (polar residues) spans 588-600; that stretch reads QDGSSAQNCSTSP.

The protein belongs to the sodium:neurotransmitter symporter (SNF) (TC 2.A.22) family. SLC6A12 subfamily. In terms of assembly, interacts with LIN7C.

The protein localises to the basolateral cell membrane. Its subcellular location is the cell membrane. The enzyme catalyses 4-aminobutanoate(out) + chloride(out) + 3 Na(+)(out) = 4-aminobutanoate(in) + chloride(in) + 3 Na(+)(in). It catalyses the reaction glycine betaine(out) + 2 chloride(out) + 3 Na(+)(out) = glycine betaine(in) + 2 chloride(in) + 3 Na(+)(in). Its function is as follows. Transporter that mediates cellular uptake of betaine and GABA in a sodium- and chloride-dependent process. May have a role in regulation of GABAergic transmission in the brain through the reuptake of GABA into presynaptic terminals, as well as in osmotic regulation. Probably also involved in renal and hepatic osmotic regulation. The protein is Sodium- and chloride-dependent betaine transporter (Slc6a12) of Rattus norvegicus (Rat).